Consider the following 421-residue polypeptide: UDP-N-acetylglucosamine 1-carboxyvinyltransferase (421 aa).

26–27 provides a ligand contact to phosphoenolpyruvate; sequence KN. R96 contributes to the UDP-N-acetyl-alpha-D-glucosamine binding site. D120 acts as the Proton donor in catalysis. D308 and V330 together coordinate UDP-N-acetyl-alpha-D-glucosamine.

This sequence belongs to the EPSP synthase family. MurA subfamily.

The protein resides in the cytoplasm. It catalyses the reaction phosphoenolpyruvate + UDP-N-acetyl-alpha-D-glucosamine = UDP-N-acetyl-3-O-(1-carboxyvinyl)-alpha-D-glucosamine + phosphate. It participates in cell wall biogenesis; peptidoglycan biosynthesis. In terms of biological role, cell wall formation. Adds enolpyruvyl to UDP-N-acetylglucosamine. This is UDP-N-acetylglucosamine 1-carboxyvinyltransferase from Corynebacterium efficiens (strain DSM 44549 / YS-314 / AJ 12310 / JCM 11189 / NBRC 100395).